We begin with the raw amino-acid sequence, 344 residues long: tRNA N6-adenosine threonylcarbamoyltransferase (344 aa).

2 residues coordinate Fe cation: histidine 118 and histidine 122. Substrate is bound by residues 141–145 (TASGG), aspartate 174, glycine 187, and asparagine 284. A Fe cation-binding site is contributed by aspartate 312.

This sequence belongs to the KAE1 / TsaD family. Requires Fe(2+) as cofactor.

It is found in the cytoplasm. It carries out the reaction L-threonylcarbamoyladenylate + adenosine(37) in tRNA = N(6)-L-threonylcarbamoyladenosine(37) in tRNA + AMP + H(+). In terms of biological role, required for the formation of a threonylcarbamoyl group on adenosine at position 37 (t(6)A37) in tRNAs that read codons beginning with adenine. Is involved in the transfer of the threonylcarbamoyl moiety of threonylcarbamoyl-AMP (TC-AMP) to the N6 group of A37, together with TsaE and TsaB. TsaD likely plays a direct catalytic role in this reaction. The protein is tRNA N6-adenosine threonylcarbamoyltransferase of Desulfotalea psychrophila (strain LSv54 / DSM 12343).